The sequence spans 172 residues: Large ribosomal subunit protein uL10 (172 aa).

The protein belongs to the universal ribosomal protein uL10 family. In terms of assembly, part of the ribosomal stalk of the 50S ribosomal subunit. The N-terminus interacts with L11 and the large rRNA to form the base of the stalk. The C-terminus forms an elongated spine to which L12 dimers bind in a sequential fashion forming a multimeric L10(L12)X complex.

Forms part of the ribosomal stalk, playing a central role in the interaction of the ribosome with GTP-bound translation factors. This is Large ribosomal subunit protein uL10 from Chelativorans sp. (strain BNC1).